The primary structure comprises 1018 residues: Collagen, type I, alpha 1a (1018 aa).

The segment covering 1–10 (QMSAGYDDKS) has biased composition (basic and acidic residues). Positions 1 to 991 (QMSAGYDDKS…SGEYWLDPDQ (991 aa)) are disordered. Positions 13–30 (MPVPGPMGPMGPRGPPGS) are enriched in pro residues. Positions 31-58 (PGASGPQGFTGPPGEPGEAGPSGAMGPR) are enriched in low complexity. Positions 67–81 (NGEDGESGKPGRGGE) are enriched in basic and acidic residues. A compositionally biased stretch (low complexity) spans 126–136 (PRGNDGAAGAA). Over residues 138 to 151 (PPGPTGPAGPPGFP) the composition is skewed to pro residues. Residues 152–170 (GGPGAKGDAGAQGGRGPEG) show a composition bias toward gly residues. Low complexity-rich tracts occupy residues 171 to 214 (PAGA…AGAP) and 223 to 261 (SGPQGAAGAPGPKGNTGEVGAPGAKGEAGAKGEAGAPGV). The span at 284–296 (GARGGPGGRGFPG) shows a compositional bias: gly residues. 4 stretches are compositionally biased toward low complexity: residues 370 to 385 (VGARGQPGVMGFPGPK), 424 to 442 (AGPAGERXXXGPAGAPGFQ), 452 to 510 (LPGE…QGMP), and 543 to 558 (RGLTGPLGLPGPAGAT). Residues 568-577 (GPVGPGGARG) show a composition bias toward gly residues. Composition is skewed to low complexity over residues 591 to 627 (AGFAGPPGADGQPGAKGEAGDNGAKGDAGPPGAAGPT) and 641 to 663 (PKGARGAAGPPGATGFPGAAGRV). Positions 665-677 (PPGPSGNPGPPGP) are enriched in pro residues. Composition is skewed to low complexity over residues 701 to 746 (EVGA…XXPG) and 775 to 795 (PGLAGAPGEPGREGSPGNEGS). Over residues 819–829 (APGPPGAPGPV) the composition is skewed to pro residues. The span at 843-862 (PAGPAGSAGPAGPRGPAGAP) shows a compositional bias: low complexity. Basic and acidic residues predominate over residues 865-876 (RGDKGESGEAGE). The segment covering 889–925 (SGSSGEQGPAGAAGPAGPRGPAGSAGSPGKDGMSGLP) has biased composition (low complexity). In terms of domain architecture, Fibrillar collagen NC1 spans 932–1018 (GPRGGFDLGF…CTSHTGTWGK (87 aa)). Over residues 948-959 (KAPDPFRDRDLE) the composition is skewed to basic and acidic residues. Polar residues predominate over residues 963-973 (TLKSLSQQLEQ).

It belongs to the fibrillar collagen family.

It localises to the secreted. Its subcellular location is the extracellular space. The protein localises to the extracellular matrix. This Epinephelus costae (Goldblotch grouper) protein is Collagen, type I, alpha 1a.